A 529-amino-acid polypeptide reads, in one-letter code: tRNA-2-methylthio-N(6)-dimethylallyladenosine synthase 1 (529 aa).

The interval 1–21 is disordered; the sequence is MTQDHIVTERPPATRNDTAGN. In terms of domain architecture, MTTase N-terminal spans 25-141; it reads RTYEVRTLGC…LPVLLERSRH (117 aa). The [4Fe-4S] cluster site is built by Cys34, Cys70, Cys104, Cys178, Cys182, and Cys185. One can recognise a Radical SAM core domain in the interval 164 to 407; sequence RDSAYAAWVS…VALQERISLE (244 aa). The region spanning 410 to 480 is the TRAM domain; it reads RSLVGTRQEL…PHHLIADGPL (71 aa). The interval 481 to 504 is disordered; the sequence is LQHRRTPAGDASERGQTPTTRGVG.

It belongs to the methylthiotransferase family. MiaB subfamily. In terms of assembly, monomer. The cofactor is [4Fe-4S] cluster.

The protein resides in the cytoplasm. The catalysed reaction is N(6)-dimethylallyladenosine(37) in tRNA + (sulfur carrier)-SH + AH2 + 2 S-adenosyl-L-methionine = 2-methylsulfanyl-N(6)-dimethylallyladenosine(37) in tRNA + (sulfur carrier)-H + 5'-deoxyadenosine + L-methionine + A + S-adenosyl-L-homocysteine + 2 H(+). Functionally, catalyzes the methylthiolation of N6-(dimethylallyl)adenosine (i(6)A), leading to the formation of 2-methylthio-N6-(dimethylallyl)adenosine (ms(2)i(6)A) at position 37 in tRNAs that read codons beginning with uridine. The chain is tRNA-2-methylthio-N(6)-dimethylallyladenosine synthase 1 from Mycobacterium marinum (strain ATCC BAA-535 / M).